The primary structure comprises 439 residues: Glutamate-1-semialdehyde 2,1-aminomutase (439 aa).

At Lys-270 the chain carries N6-(pyridoxal phosphate)lysine.

This sequence belongs to the class-III pyridoxal-phosphate-dependent aminotransferase family. HemL subfamily. As to quaternary structure, homodimer. Pyridoxal 5'-phosphate is required as a cofactor.

The protein resides in the cytoplasm. The enzyme catalyses (S)-4-amino-5-oxopentanoate = 5-aminolevulinate. Its pathway is porphyrin-containing compound metabolism; protoporphyrin-IX biosynthesis; 5-aminolevulinate from L-glutamyl-tRNA(Glu): step 2/2. This chain is Glutamate-1-semialdehyde 2,1-aminomutase, found in Kocuria rhizophila (strain ATCC 9341 / DSM 348 / NBRC 103217 / DC2201).